Consider the following 93-residue polypeptide: Acylphosphatase (93 aa).

The Acylphosphatase-like domain occupies Ala-5–Gly-93. Catalysis depends on residues Arg-20 and Asn-38.

This sequence belongs to the acylphosphatase family.

It carries out the reaction an acyl phosphate + H2O = a carboxylate + phosphate + H(+). This Lacticaseibacillus paracasei (strain ATCC 334 / BCRC 17002 / CCUG 31169 / CIP 107868 / KCTC 3260 / NRRL B-441) (Lactobacillus paracasei) protein is Acylphosphatase (acyP).